The following is a 336-amino-acid chain: tRNA N6-adenosine threonylcarbamoyltransferase (336 aa).

Fe cation is bound by residues His-108 and His-112. Substrate-binding positions include 129 to 133 (LISGG), Asp-161, Glu-178, and Ser-258. Asp-286 provides a ligand contact to Fe cation.

It belongs to the KAE1 / TsaD family. Fe(2+) is required as a cofactor.

It is found in the cytoplasm. The catalysed reaction is L-threonylcarbamoyladenylate + adenosine(37) in tRNA = N(6)-L-threonylcarbamoyladenosine(37) in tRNA + AMP + H(+). Its function is as follows. Required for the formation of a threonylcarbamoyl group on adenosine at position 37 (t(6)A37) in tRNAs that read codons beginning with adenine. Is probably involved in the transfer of the threonylcarbamoyl moiety of threonylcarbamoyl-AMP (TC-AMP) to the N6 group of A37. The protein is tRNA N6-adenosine threonylcarbamoyltransferase of Pyrobaculum neutrophilum (strain DSM 2338 / JCM 9278 / NBRC 100436 / V24Sta) (Thermoproteus neutrophilus).